A 429-amino-acid polypeptide reads, in one-letter code: Glutamate-1-semialdehyde 2,1-aminomutase 2 (429 aa).

Lysine 268 carries the N6-(pyridoxal phosphate)lysine modification.

It belongs to the class-III pyridoxal-phosphate-dependent aminotransferase family. HemL subfamily. As to quaternary structure, homodimer. Pyridoxal 5'-phosphate serves as cofactor.

Its subcellular location is the cytoplasm. The enzyme catalyses (S)-4-amino-5-oxopentanoate = 5-aminolevulinate. It participates in porphyrin-containing compound metabolism; protoporphyrin-IX biosynthesis; 5-aminolevulinate from L-glutamyl-tRNA(Glu): step 2/2. The protein is Glutamate-1-semialdehyde 2,1-aminomutase 2 of Staphylococcus aureus (strain Mu50 / ATCC 700699).